The following is a 300-amino-acid chain: Probable acetyltransferase Rv3034c (300 aa).

The N-terminal stretch at 1–25 (MNVLSLGSSSGVVWGRVPITAPAGA) is a signal peptide.

Belongs to the transferase hexapeptide repeat family.

In terms of biological role, may be involved in the biosynthesis of 6-O-methylglucosyl-containing lipopolysaccharides (MGLP). Functionally, regulates host peroxisome homeostasis in response to intracellular redox levels to favor mycobacterial infection in macrophage. Induces the expression of host peroxisome biogenesis and proliferation factors as well as peroxisome associated enzymes. Inhibits the induction of host pexophagy mechanism by down-regulating the expression of pexophagy associated proteins and adapter molecules in infected macrophages. However, during increased oxidative stress conditions, it induces degradation of dysfunctional and damaged peroxisomes. Regulation of peroxisome biogenesis and degradation is dependent upon host p-mTORC1 mediated signaling pathway. The polypeptide is Probable acetyltransferase Rv3034c (Mycobacterium tuberculosis (strain ATCC 25618 / H37Rv)).